A 492-amino-acid polypeptide reads, in one-letter code: Probable G-protein coupled receptor Mth-like 8 (492 aa).

The N-terminal stretch at 1–21 (MAQFCILGVLLILSGTHCSWG) is a signal peptide. Topologically, residues 22–218 (FHEETHYPCA…FVLGVREWTY (197 aa)) are extracellular. 4 disulfide bridges follow: cysteine 30–cysteine 82, cysteine 84–cysteine 89, cysteine 93–cysteine 184, and cysteine 94–cysteine 107. Residues asparagine 37 and asparagine 51 are each glycosylated (N-linked (GlcNAc...) asparagine). N-linked (GlcNAc...) asparagine glycosylation is found at asparagine 129, asparagine 169, and asparagine 192. A helical transmembrane segment spans residues 219 to 239 (AICLLIAILSMFIVLMVYLMC). At 240-245 (SEMRNS) the chain is on the cytoplasmic side. The helical transmembrane segment at 246 to 266 (FYGVAIKAYAICMILGYALLA) threads the bilayer. Residues 267–282 (YLTLHNPANLSNAACR) lie on the Extracellular side of the membrane. Residue asparagine 275 is glycosylated (N-linked (GlcNAc...) asparagine). Residues 283–303 (ILPSLALMNLVLSFYILSFIA) traverse the membrane as a helical segment. Residues 304-317 (FKLYLSFYGVVFTK) lie on the Cytoplasmic side of the membrane. Residues 318 to 338 (LMFWLIFTPIVLVAVGWSFFV) form a helical membrane-spanning segment. The Extracellular portion of the chain corresponds to 339–362 (GFSYYGSRLIFGGDTCWFDPRNWS). Residue asparagine 360 is glycosylated (N-linked (GlcNAc...) asparagine). Residues 363-383 (VMIYFYAPVFVACAISGFFYV) form a helical membrane-spanning segment. Residues 384–411 (LSQIYIRDQPDIETEKSFESIEKNRFKS) are Cytoplasmic-facing. A helical transmembrane segment spans residues 412-432 (FWKYFGYTAVVWVVCICSFAF). Topologically, residues 433-441 (NYYWENRSH) are extracellular. Asparagine 438 carries an N-linked (GlcNAc...) asparagine glycan. Residues 442-462 (LNYAVSFCMAFHGFAALYALI) form a helical membrane-spanning segment. Topologically, residues 463 to 492 (GKNQQIQNFLRRIDNGEDTCENSVPLSSFG) are cytoplasmic.

This sequence belongs to the G-protein coupled receptor 2 family. Mth subfamily.

It is found in the cell membrane. The sequence is that of Probable G-protein coupled receptor Mth-like 8 (mthl8) from Drosophila melanogaster (Fruit fly).